Reading from the N-terminus, the 426-residue chain is UPF0164 protein TP_0548 (426 aa).

The first 37 residues, 1 to 37 (MISCSVRRRPRWEPQVGAAFLAFALLPVLASGRGMQA), serve as a signal peptide directing secretion.

This sequence belongs to the UPF0164 family.

The protein is UPF0164 protein TP_0548 of Treponema pallidum (strain Nichols).